Reading from the N-terminus, the 819-residue chain is Lon protease (819 aa).

Residues 1 to 14 (MNSTNNTDSQNLDP) are compositionally biased toward polar residues. Residues 1–40 (MNSTNNTDSQNLDPNASEVEKLLDESAEAEEKVDDHTPPS) form a disordered region. Residues 18 to 38 (EVEKLLDESAEAEEKVDDHTP) show a composition bias toward basic and acidic residues. One can recognise a Lon N-terminal domain in the interval 42 to 239 (LFILPLNKRP…KALVLLKKEL (198 aa)). ATP is bound at residue 392 to 399 (GPPGVGKT). The region spanning 634–818 (KTPVGVATGL…DDVFKIAFPG (185 aa)) is the Lon proteolytic domain. Active-site residues include Ser-724 and Lys-767.

The protein belongs to the peptidase S16 family. Homohexamer. Organized in a ring with a central cavity.

Its subcellular location is the cytoplasm. It catalyses the reaction Hydrolysis of proteins in presence of ATP.. Its function is as follows. ATP-dependent serine protease that mediates the selective degradation of mutant and abnormal proteins as well as certain short-lived regulatory proteins. Required for cellular homeostasis and for survival from DNA damage and developmental changes induced by stress. Degrades polypeptides processively to yield small peptide fragments that are 5 to 10 amino acids long. Binds to DNA in a double-stranded, site-specific manner. The sequence is that of Lon protease from Chlamydia trachomatis serovar D (strain ATCC VR-885 / DSM 19411 / UW-3/Cx).